Here is a 125-residue protein sequence, read N- to C-terminus: Inner membrane protein YbaN (125 aa).

Topologically, residues 1-6 are cytoplasmic; it reads MQRIIL. A helical transmembrane segment spans residues 7–26; that stretch reads IIIGWLAVVLGTLGVVLPVL. Residues 27–45 lie on the Periplasmic side of the membrane; sequence PTTPFILLAAWCFARSSPR. Residues 46–63 form a helical membrane-spanning segment; the sequence is FHAWLLYRSWFGSYLRFW. The Cytoplasmic portion of the chain corresponds to 64–74; that stretch reads QKHHAMPRGVK. A helical membrane pass occupies residues 75–92; the sequence is PRAILLILLTFAISLWFV. Residues 93-95 are Periplasmic-facing; that stretch reads QMP. The helical transmembrane segment at 96–118 threads the bilayer; it reads WVRIMLLVILACLLFYMWRIPVI. The Cytoplasmic segment spans residues 119-125; that stretch reads DEKQEKH.

It localises to the cell inner membrane. This is Inner membrane protein YbaN (ybaN) from Escherichia coli O157:H7.